Consider the following 126-residue polypeptide: Aspartate 1-decarboxylase (126 aa).

Residue serine 25 is the Schiff-base intermediate with substrate; via pyruvic acid of the active site. Residue serine 25 is modified to Pyruvic acid (Ser). Threonine 57 is a substrate binding site. The active-site Proton donor is the tyrosine 58. 73-75 (GSA) provides a ligand contact to substrate.

It belongs to the PanD family. As to quaternary structure, heterooctamer of four alpha and four beta subunits. It depends on pyruvate as a cofactor. Is synthesized initially as an inactive proenzyme, which is activated by self-cleavage at a specific serine bond to produce a beta-subunit with a hydroxyl group at its C-terminus and an alpha-subunit with a pyruvoyl group at its N-terminus.

It is found in the cytoplasm. It carries out the reaction L-aspartate + H(+) = beta-alanine + CO2. Its pathway is cofactor biosynthesis; (R)-pantothenate biosynthesis; beta-alanine from L-aspartate: step 1/1. Its function is as follows. Catalyzes the pyruvoyl-dependent decarboxylation of aspartate to produce beta-alanine. The polypeptide is Aspartate 1-decarboxylase (Acidovorax ebreus (strain TPSY) (Diaphorobacter sp. (strain TPSY))).